Consider the following 302-residue polypeptide: Phytoene synthase (302 aa).

Belongs to the phytoene/squalene synthase family. The cofactor is ATP. Mn(2+) serves as cofactor. It depends on Mg(2+) as a cofactor.

It participates in carotenoid biosynthesis; phytoene biosynthesis. In terms of biological role, involved in the biosynthesis of carotenoids. Catalyzes the condensation of two molecules of geranylgeranyl diphosphate (GGPP) to give prephytoene diphosphate (PPPP) and the subsequent rearrangement of the cyclopropylcarbinyl intermediate to yield phytoene. This is Phytoene synthase (crtB) from Mycobacterium bovis (strain ATCC BAA-935 / AF2122/97).